A 641-amino-acid polypeptide reads, in one-letter code: Fructose-1,6-bisphosphatase class 3 (641 aa).

This sequence belongs to the FBPase class 3 family. Mn(2+) is required as a cofactor.

It carries out the reaction beta-D-fructose 1,6-bisphosphate + H2O = beta-D-fructose 6-phosphate + phosphate. It participates in carbohydrate biosynthesis; gluconeogenesis. The protein is Fructose-1,6-bisphosphatase class 3 of Bacillus velezensis (strain DSM 23117 / BGSC 10A6 / LMG 26770 / FZB42) (Bacillus amyloliquefaciens subsp. plantarum).